A 321-amino-acid chain; its full sequence is NADH-ubiquinone oxidoreductase chain 1 (321 aa).

8 helical membrane-spanning segments follow: residues 2-22 (LVMLTSTLILVLMVLLAVAFL), 71-91 (ALFIAAPIMALTLALSLWMFI), 104-124 (LLVILAISSLSVYASLGSGWA), 148-168 (LGLILLCLIILTGGFSLQAFI), 173-193 (HTWFLLSSWPLAAMWFVSTLA), 224-244 (LFFLAEYSNILFMNTLTAIMF), 255-275 (ILPIINVMMKATPLIILFLWI), and 295-315 (FLPLNLALFTLQLSLAVSLGG).

The protein belongs to the complex I subunit 1 family.

It localises to the mitochondrion inner membrane. It catalyses the reaction a ubiquinone + NADH + 5 H(+)(in) = a ubiquinol + NAD(+) + 4 H(+)(out). Core subunit of the mitochondrial membrane respiratory chain NADH dehydrogenase (Complex I) that is believed to belong to the minimal assembly required for catalysis. Complex I functions in the transfer of electrons from NADH to the respiratory chain. The immediate electron acceptor for the enzyme is believed to be ubiquinone. The protein is NADH-ubiquinone oxidoreductase chain 1 (MT-ND1) of Lampetra fluviatilis (European river lamprey).